The sequence spans 329 residues: Acetyl-coenzyme A carboxylase carboxyl transferase subunit alpha (329 aa).

The CoA carboxyltransferase C-terminal domain occupies 40-294 (QLETLAARRR…KESLIRNLRE (255 aa)).

Belongs to the AccA family. In terms of assembly, acetyl-CoA carboxylase is a heterohexamer composed of biotin carboxyl carrier protein (AccB), biotin carboxylase (AccC) and two subunits each of ACCase subunit alpha (AccA) and ACCase subunit beta (AccD).

It localises to the cytoplasm. It carries out the reaction N(6)-carboxybiotinyl-L-lysyl-[protein] + acetyl-CoA = N(6)-biotinyl-L-lysyl-[protein] + malonyl-CoA. It functions in the pathway lipid metabolism; malonyl-CoA biosynthesis; malonyl-CoA from acetyl-CoA: step 1/1. In terms of biological role, component of the acetyl coenzyme A carboxylase (ACC) complex. First, biotin carboxylase catalyzes the carboxylation of biotin on its carrier protein (BCCP) and then the CO(2) group is transferred by the carboxyltransferase to acetyl-CoA to form malonyl-CoA. The chain is Acetyl-coenzyme A carboxylase carboxyl transferase subunit alpha from Prochlorococcus marinus (strain MIT 9211).